Reading from the N-terminus, the 786-residue chain is Aculeacin-A acylase (786 aa).

The signal sequence occupies residues 1 to 22 (MTSSYMRLKAAAIAFGVIVATA). A propeptide spanning residues 23-34 (AVPSPASGREHD) is cleaved from the precursor. Residues 35-130 (GGYAALIRRA…PRDGVRAPCD (96 aa)) are substrate-binding. A propeptide spans 215-229 (AAIAAALDGTSAGIG) (spacer peptide). Residues 220–239 (ALDGTSAGIGSNAYGLGAQA) form a possible recognition-sequence of an AAC processing enzyme region. The Nucleophile role is filled by S230. Positions 658–689 (ACNGSPASPSTRSVGDIHTDSRGERRIPIHGG) are disordered. Over residues 672 to 684 (GDIHTDSRGERRI) the composition is skewed to basic and acidic residues.

It belongs to the peptidase S45 family. Heterodimer of a small subunit and a large subunit processed from the same precursor.

The protein localises to the secreted. Functionally, catalyzes the hydrolysis of the palmitoyl moiety of the antifungal antibiotic, aculeacin-A, giving a hexapeptide moiety and a long chain fatty acid. This is Aculeacin-A acylase (aac) from Actinoplanes utahensis.